We begin with the raw amino-acid sequence, 309 residues long: Homoserine O-succinyltransferase (309 aa).

Cys142 functions as the Acyl-thioester intermediate in the catalytic mechanism. Positions 163 and 192 each coordinate substrate. Residue His235 is the Proton acceptor of the active site. Glu237 is a catalytic residue. Residue Arg249 coordinates substrate.

The protein belongs to the MetA family. Homodimer.

The protein resides in the cytoplasm. It carries out the reaction L-homoserine + succinyl-CoA = O-succinyl-L-homoserine + CoA. It participates in amino-acid biosynthesis; L-methionine biosynthesis via de novo pathway; O-succinyl-L-homoserine from L-homoserine: step 1/1. Its function is as follows. Transfers a succinyl group from succinyl-CoA to L-homoserine, forming succinyl-L-homoserine. This is Homoserine O-succinyltransferase from Salmonella gallinarum (strain 287/91 / NCTC 13346).